The following is a 135-amino-acid chain: Ribosome-binding factor A (135 aa).

Belongs to the RbfA family. Monomer. Binds 30S ribosomal subunits, but not 50S ribosomal subunits or 70S ribosomes.

The protein resides in the cytoplasm. Its function is as follows. One of several proteins that assist in the late maturation steps of the functional core of the 30S ribosomal subunit. Associates with free 30S ribosomal subunits (but not with 30S subunits that are part of 70S ribosomes or polysomes). Required for efficient processing of 16S rRNA. May interact with the 5'-terminal helix region of 16S rRNA. The protein is Ribosome-binding factor A of Bartonella henselae (strain ATCC 49882 / DSM 28221 / CCUG 30454 / Houston 1) (Rochalimaea henselae).